A 211-amino-acid polypeptide reads, in one-letter code: Thymidylate kinase (211 aa).

Residue 10–17 (GIDGSGKT) coordinates ATP.

This sequence belongs to the thymidylate kinase family.

The enzyme catalyses dTMP + ATP = dTDP + ADP. In terms of biological role, phosphorylation of dTMP to form dTDP in both de novo and salvage pathways of dTTP synthesis. The sequence is that of Thymidylate kinase from Prochlorococcus marinus (strain NATL1A).